A 603-amino-acid polypeptide reads, in one-letter code: UvrABC system protein C (603 aa).

Residues Asp15–Ile92 form the GIY-YIG domain. In terms of domain architecture, UVR spans Lys197–Thr232.

It belongs to the UvrC family. Interacts with UvrB in an incision complex.

It localises to the cytoplasm. Its function is as follows. The UvrABC repair system catalyzes the recognition and processing of DNA lesions. UvrC both incises the 5' and 3' sides of the lesion. The N-terminal half is responsible for the 3' incision and the C-terminal half is responsible for the 5' incision. The chain is UvrABC system protein C from Listeria welshimeri serovar 6b (strain ATCC 35897 / DSM 20650 / CCUG 15529 / CIP 8149 / NCTC 11857 / SLCC 5334 / V8).